We begin with the raw amino-acid sequence, 122 residues long: Basic phospholipase A2 F16 (122 aa).

7 disulfides stabilise this stretch: C26–C115, C28–C44, C43–C95, C49–C122, C50–C88, C57–C81, and C75–C86. The Ca(2+) site is built by Y27, G29, and G31. H47 is an active-site residue. D48 contributes to the Ca(2+) binding site. Residue D89 is part of the active site.

Belongs to the phospholipase A2 family. Group II subfamily. D49 sub-subfamily. Requires Ca(2+) as cofactor. As to expression, expressed by the venom gland.

Its subcellular location is the secreted. The enzyme catalyses a 1,2-diacyl-sn-glycero-3-phosphocholine + H2O = a 1-acyl-sn-glycero-3-phosphocholine + a fatty acid + H(+). Its activity is regulated as follows. Pre-incubation with heparin markedly reduces the neurotoxicity of this toxin. Its function is as follows. Snake venom phospholipase A2 (PLA2) that produces neuromuscular blockade in chick biventer cervicis preparations in the absence and presence of crotapotin. In contrast, in mouse phrenic nerve-diaphragm preparations, the neuromuscular blockade is dependent on crotapotin. PLA2 catalyzes the calcium-dependent hydrolysis of the 2-acyl groups in 3-sn-phosphoglycerides. In Crotalus durissus terrificus (South American rattlesnake), this protein is Basic phospholipase A2 F16.